The primary structure comprises 321 residues: Nucleotide-binding protein GOX0815 (321 aa).

27–34 lines the ATP pocket; sequence GLSGAGKS. 72–75 provides a ligand contact to GTP; that stretch reads DVRS.

The protein belongs to the RapZ-like family.

In terms of biological role, displays ATPase and GTPase activities. This Gluconobacter oxydans (strain 621H) (Gluconobacter suboxydans) protein is Nucleotide-binding protein GOX0815.